Reading from the N-terminus, the 492-residue chain is Cytoplasmic dynein 1 light intermediate chain 2 (492 aa).

An ATP-binding site is contributed by 61-68 (GEDGSGKT). Disordered stretches follow at residues 187-206 (PEEGCQGSPQRRGPLTSGSD), 371-423 (AKQP…KNNA), and 437-492 (LSKK…ENEA). Residue Ser-194 is modified to Phosphoserine. Residues 371-381 (AKQPATPTRAS) are compositionally biased toward polar residues. Residues Ser-383 and Ser-391 each carry the phosphoserine modification. Residue Arg-397 is modified to Omega-N-methylarginine. Thr-441 carries the phosphothreonine modification. Residues Ser-443 and Ser-446 each carry the phosphoserine modification. Polar residues predominate over residues 452–469 (VQSTAKKSGQKTVLSNVQ). The segment covering 471-480 (ELDRMTRKPD) has biased composition (basic and acidic residues). A compositionally biased stretch (polar residues) spans 482–492 (MVTNSSTENEA).

This sequence belongs to the dynein light intermediate chain family. As to quaternary structure, homodimer. The cytoplasmic dynein 1 complex consists of two catalytic heavy chains (HCs) and a number of non-catalytic subunits presented by intermediate chains (ICs), light intermediate chains (LICs) and light chains (LCs); the composition seems to vary in respect to the IC, LIC and LC composition. The heavy chain homodimer serves as a scaffold for the probable homodimeric assembly of the respective non-catalytic subunits. The ICs and LICs bind directly to the HC dimer and the LCs assemble on the IC dimer. Interacts with DYNC1H1; DYNC1LI1 and DYNC1LI2 bind mutually exclusive to DYNC1H.

It is found in the cytoplasm. The protein resides in the cytoskeleton. Functionally, acts as one of several non-catalytic accessory components of the cytoplasmic dynein 1 complex that are thought to be involved in linking dynein to cargos and to adapter proteins that regulate dynein function. Cytoplasmic dynein 1 acts as a motor for the intracellular retrograde motility of vesicles and organelles along microtubules. May play a role in binding dynein to membranous organelles or chromosomes. The chain is Cytoplasmic dynein 1 light intermediate chain 2 (DYNC1LI2) from Pongo abelii (Sumatran orangutan).